The sequence spans 261 residues: Insulin-like growth factor-binding protein-related protein 1 (261 aa).

The N-terminal stretch at 1 to 17 (MWIPLLLVALVVPAIRC) is a signal peptide. Residues 18–101 (ERKCGECNPE…DPPEAMCVCL (84 aa)) form the IGFBP N-terminal domain. 8 disulfide bridges follow: C21–C45, C24–C47, C29–C48, C36–C51, C59–C82, C76–C98, C100–C118, and C107–C139. A Kazal-like domain is found at 70-141 (NRGHGPCGEY…RAMHRGPCKS (72 aa)). Residues 143–243 (PKITSPPEEA…GESSAAARVV (101 aa)) enclose the Ig-like C2-type domain. N154 carries an N-linked (GlcNAc...) asparagine glycan. An intrachain disulfide couples C164 to C227.

In terms of tissue distribution, expressed by the venom gland.

It localises to the secreted. The protein is Insulin-like growth factor-binding protein-related protein 1 of Cupiennius salei (American wandering spider).